The following is a 128-amino-acid chain: Protein Wnt-8 (128 aa).

S1 is lipidated: O-palmitoleoyl serine. Intrachain disulfides connect C69/C109 and C85/C102. An N-linked (GlcNAc...) asparagine glycan is attached at N72.

Belongs to the Wnt family. Palmitoleoylation is required for efficient binding to frizzled receptors. Depalmitoleoylation leads to Wnt signaling pathway inhibition. Post-translationally, proteolytic processing by tiki1 and tiki2 promotes oxidation and formation of large disulfide-bond oligomers, leading to inactivation of wnt8.

The protein localises to the secreted. Its subcellular location is the extracellular space. The protein resides in the extracellular matrix. Its function is as follows. Ligand for members of the frizzled family of seven transmembrane receptors. Probable developmental protein. May be a signaling molecule which affects the development of discrete regions of tissues. Is likely to signal over only few cell diameters. The sequence is that of Protein Wnt-8 (WNT-8) from Evasterias troschelii (Mottled sea star).